A 315-amino-acid polypeptide reads, in one-letter code: tRNA dimethylallyltransferase (315 aa).

Position 15-22 (15-22 (GPTACGKS)) interacts with ATP. 17–22 (TACGKS) serves as a coordination point for substrate. 2 interaction with substrate tRNA regions span residues 40–43 (DSAL) and 162–166 (QRLIR).

This sequence belongs to the IPP transferase family. As to quaternary structure, monomer. Requires Mg(2+) as cofactor.

The catalysed reaction is adenosine(37) in tRNA + dimethylallyl diphosphate = N(6)-dimethylallyladenosine(37) in tRNA + diphosphate. Its function is as follows. Catalyzes the transfer of a dimethylallyl group onto the adenine at position 37 in tRNAs that read codons beginning with uridine, leading to the formation of N6-(dimethylallyl)adenosine (i(6)A). The protein is tRNA dimethylallyltransferase of Buchnera aphidicola subsp. Acyrthosiphon pisum (strain APS) (Acyrthosiphon pisum symbiotic bacterium).